Here is a 196-residue protein sequence, read N- to C-terminus: Probable histone chaperone ASF1A (196 aa).

Residues 146-157 (VTKFPIDFHPEE) are compositionally biased toward basic and acidic residues. A disordered region spans residues 146-196 (VTKFPIDFHPEEEQTAATAAPPEQSDEQQPNVNGEAQVLPDQSVEPKPEES).

Belongs to the ASF1 family. Interacts with histone H3 and histone H4. Component of the HIRA complex made of UBN1, UBN2, ASF1A, CABIN1 and HIRA. Interacts with HIRA. In terms of tissue distribution, expressed in leaves and flower buds.

It is found in the nucleus. The protein localises to the nucleolus. In terms of biological role, histone chaperone that facilitates histone deposition and histone exchange and removal during nucleosome assembly and disassembly. While encoded by a region of the Arabidopsis thaliana genome that is homologous to the Brassica S-locus for self incompatibility, this protein may not play the same role in Arabidopsis thaliana. This chain is Probable histone chaperone ASF1A (ASF1A), found in Arabidopsis thaliana (Mouse-ear cress).